Reading from the N-terminus, the 601-residue chain is DNA ligase (601 aa).

D258 provides a ligand contact to ATP. Catalysis depends on K260, which acts as the N6-AMP-lysine intermediate. Positions 265, 280, 310, 350, 427, and 433 each coordinate ATP. A disordered region spans residues 568–601 (DKSPEDATTTDEILEMYNKQPKKKIESPPIDESV).

It belongs to the ATP-dependent DNA ligase family. It depends on Mg(2+) as a cofactor.

It catalyses the reaction ATP + (deoxyribonucleotide)n-3'-hydroxyl + 5'-phospho-(deoxyribonucleotide)m = (deoxyribonucleotide)n+m + AMP + diphosphate.. Its function is as follows. DNA ligase that seals nicks in double-stranded DNA during DNA replication, DNA recombination and DNA repair. This chain is DNA ligase, found in Saccharolobus islandicus (strain Y.G.57.14 / Yellowstone #1) (Sulfolobus islandicus).